A 189-amino-acid polypeptide reads, in one-letter code: ATP synthase subunit b (189 aa).

A helical transmembrane segment spans residues 7–27 (LLIAALAVAPLAHAAEGGFVG).

The protein belongs to the ATPase B chain family. As to quaternary structure, F-type ATPases have 2 components, F(1) - the catalytic core - and F(0) - the membrane proton channel. F(1) has five subunits: alpha(3), beta(3), gamma(1), delta(1), epsilon(1). F(0) has three main subunits: a(1), b(2) and c(10-14). The alpha and beta chains form an alternating ring which encloses part of the gamma chain. F(1) is attached to F(0) by a central stalk formed by the gamma and epsilon chains, while a peripheral stalk is formed by the delta and b chains.

Its subcellular location is the cell inner membrane. In terms of biological role, f(1)F(0) ATP synthase produces ATP from ADP in the presence of a proton or sodium gradient. F-type ATPases consist of two structural domains, F(1) containing the extramembraneous catalytic core and F(0) containing the membrane proton channel, linked together by a central stalk and a peripheral stalk. During catalysis, ATP synthesis in the catalytic domain of F(1) is coupled via a rotary mechanism of the central stalk subunits to proton translocation. Component of the F(0) channel, it forms part of the peripheral stalk, linking F(1) to F(0). The sequence is that of ATP synthase subunit b from Hyphomonas neptunium (strain ATCC 15444).